The following is a 363-amino-acid chain: Aminomethyltransferase (363 aa).

This sequence belongs to the GcvT family. The glycine cleavage system is composed of four proteins: P, T, L and H.

The enzyme catalyses N(6)-[(R)-S(8)-aminomethyldihydrolipoyl]-L-lysyl-[protein] + (6S)-5,6,7,8-tetrahydrofolate = N(6)-[(R)-dihydrolipoyl]-L-lysyl-[protein] + (6R)-5,10-methylene-5,6,7,8-tetrahydrofolate + NH4(+). The glycine cleavage system catalyzes the degradation of glycine. The protein is Aminomethyltransferase of Nitrosomonas eutropha (strain DSM 101675 / C91 / Nm57).